Here is a 449-residue protein sequence, read N- to C-terminus: UNC93-like protein MFSD11 (449 aa).

A helical transmembrane segment spans residues 8-28 (LFNIIILGVAFMFMFTAFQTC). N-linked (GlcNAc...) asparagine glycosylation is present at Asn-40. The next 5 helical transmembrane spans lie at 53–73 (AIIYGVFSASNLITPSVVAIV), 74–94 (GPQLSMFASGLFYSMYIAVFI), 96–116 (PFPWSFYTASVFIGIAAAVLW), 138–158 (IFWALLQSSLFFGNLYIYFAW), and 170–190 (RTVFIALTVISLVGTVLFFLI). At Ser-204 the chain carries Phosphoserine. Transmembrane regions (helical) follow at residues 239-259 (MLLLSITTAYTGLELTFFSGV), 277-297 (LIGLSGIFIGIGEILGGSLFG), 309-329 (PVVLLGILVHFIAFYLIFLNM), 359-379 (FLLGLGDSCFNTQLLSILGFL), 385-405 (APAFAIFKFVQSICAAVAFFY), and 410-430 (LLHWQLLVMVIFGFFGTISFF).

The protein belongs to the unc-93 family.

The protein resides in the membrane. The sequence is that of UNC93-like protein MFSD11 (MFSD11) from Macaca fascicularis (Crab-eating macaque).